A 127-amino-acid chain; its full sequence is Fluoride-specific ion channel FluC (127 aa).

Transmembrane regions (helical) follow at residues 7–27, 37–57, 70–90, and 102–122; these read LFLISCGASLGAMSRHGLTLL, FGTLIANYIGCLIMGIMLAMF, FFVTGFLGSLTTFSAFSAEVI, and ITITSLHILGCLFFTTLGVFI. G77 and T80 together coordinate Na(+).

It belongs to the fluoride channel Fluc/FEX (TC 1.A.43) family.

It localises to the cell inner membrane. The catalysed reaction is fluoride(in) = fluoride(out). With respect to regulation, na(+) is not transported, but it plays an essential structural role and its presence is essential for fluoride channel function. In terms of biological role, fluoride-specific ion channel. Important for reducing fluoride concentration in the cell, thus reducing its toxicity. The polypeptide is Fluoride-specific ion channel FluC (Histophilus somni (strain 129Pt) (Haemophilus somnus)).